A 161-amino-acid chain; its full sequence is Nucleotide-binding protein azo2183 (161 aa).

Belongs to the YajQ family.

Nucleotide-binding protein. This is Nucleotide-binding protein azo2183 from Azoarcus sp. (strain BH72).